The primary structure comprises 377 residues: uncharacterized protein (377 aa).

The next 7 membrane-spanning stretches (helical) occupy residues 21-41 (WLLAIPLLISLTLLTYGLVLF), 66-86 (LVTFVVASVVFALTVALFGLG), 163-183 (IGVLISLNLALSMVEIPGIVL), 197-217 (AILFIAIRFVGLLSTSLIAII), 236-256 (FYMGNDLVVLWIFYFFYYHIF), 292-312 (VNLICGFIEGLGFYVGYFLIL), and 339-359 (IYFLLTTTTIFSLKYLFELLF).

It localises to the cell membrane. This is an uncharacterized protein from Mycoplasma pneumoniae (strain ATCC 29342 / M129 / Subtype 1) (Mycoplasmoides pneumoniae).